The sequence spans 438 residues: Adenylosuccinate synthetase (438 aa).

GTP is bound by residues 13 to 19 (GDEGKGK) and 41 to 43 (GHT). Catalysis depends on Asp14, which acts as the Proton acceptor. Mg(2+) contacts are provided by Asp14 and Gly41. IMP-binding positions include 14 to 17 (DEGK), 39 to 42 (NAGH), Thr136, Arg150, Gln231, Thr246, and Arg310. The active-site Proton donor is the His42. Residue 306 to 312 (STTGRRR) participates in substrate binding. GTP is bound by residues Arg312, 338 to 340 (KID), and 421 to 423 (STG).

It belongs to the adenylosuccinate synthetase family. Homodimer. Mg(2+) serves as cofactor.

Its subcellular location is the cytoplasm. It catalyses the reaction IMP + L-aspartate + GTP = N(6)-(1,2-dicarboxyethyl)-AMP + GDP + phosphate + 2 H(+). It functions in the pathway purine metabolism; AMP biosynthesis via de novo pathway; AMP from IMP: step 1/2. In terms of biological role, plays an important role in the de novo pathway of purine nucleotide biosynthesis. Catalyzes the first committed step in the biosynthesis of AMP from IMP. The protein is Adenylosuccinate synthetase of Blochmanniella floridana.